The primary structure comprises 270 residues: 2-C-methyl-D-erythritol 4-phosphate cytidylyltransferase (270 aa).

Residues 1 to 33 (MSDESRPSPAETPATTFAETSAETSAAGRSPAR) form a disordered region. Residues 7–27 (PSPAETPATTFAETSAETSAA) show a composition bias toward low complexity.

The protein belongs to the IspD/TarI cytidylyltransferase family. IspD subfamily.

It carries out the reaction 2-C-methyl-D-erythritol 4-phosphate + CTP + H(+) = 4-CDP-2-C-methyl-D-erythritol + diphosphate. Its pathway is isoprenoid biosynthesis; isopentenyl diphosphate biosynthesis via DXP pathway; isopentenyl diphosphate from 1-deoxy-D-xylulose 5-phosphate: step 2/6. In terms of biological role, catalyzes the formation of 4-diphosphocytidyl-2-C-methyl-D-erythritol from CTP and 2-C-methyl-D-erythritol 4-phosphate (MEP). In Streptomyces coelicolor (strain ATCC BAA-471 / A3(2) / M145), this protein is 2-C-methyl-D-erythritol 4-phosphate cytidylyltransferase.